The following is a 171-amino-acid chain: Photosystem I assembly protein Ycf3 (171 aa).

TPR repeat units follow at residues 35–68 (AFTYYRDGMSAQSEGEYAEALQNYYKAMRLEIDP), 72–105 (SYILYNIGLIHTSNGEHAKALEYYSQALERNPSL), and 120–153 (GEQAIQQGDPETSEAWFDQAAEYWKQAIALAPSN).

This sequence belongs to the Ycf3 family.

Its subcellular location is the plastid. The protein resides in the chloroplast thylakoid membrane. In terms of biological role, essential for the assembly of the photosystem I (PSI) complex. May act as a chaperone-like factor to guide the assembly of the PSI subunits. This chain is Photosystem I assembly protein Ycf3, found in Angiopteris evecta (Mule's foot fern).